We begin with the raw amino-acid sequence, 476 residues long: Glycogen synthase (476 aa).

Residue K15 coordinates ADP-alpha-D-glucose.

Belongs to the glycosyltransferase 1 family. Bacterial/plant glycogen synthase subfamily.

The catalysed reaction is [(1-&gt;4)-alpha-D-glucosyl](n) + ADP-alpha-D-glucose = [(1-&gt;4)-alpha-D-glucosyl](n+1) + ADP + H(+). It participates in glycan biosynthesis; glycogen biosynthesis. Functionally, synthesizes alpha-1,4-glucan chains using ADP-glucose. This Haemophilus influenzae (strain PittEE) protein is Glycogen synthase.